Consider the following 236-residue polypeptide: ATP synthase subunit a (236 aa).

5 consecutive transmembrane segments (helical) span residues 17 to 37 (LSDMLMITITCLIVFIIAVAA), 75 to 95 (FLTLGVTLIMYVFVANMLGLP), 112 to 132 (DATVTLTLAVMVVALTHYYGV), 174 to 194 (IYAGEILLGLLASLGTHYGVL), and 208 to 228 (FSIFVGTIQAFIFTMLTMVYM).

The protein belongs to the ATPase A chain family. In terms of assembly, F-type ATPases have 2 components, CF(1) - the catalytic core - and CF(0) - the membrane proton channel. CF(1) has five subunits: alpha(3), beta(3), gamma(1), delta(1), epsilon(1). CF(0) has three main subunits: a(1), b(2) and c(9-12). The alpha and beta chains form an alternating ring which encloses part of the gamma chain. CF(1) is attached to CF(0) by a central stalk formed by the gamma and epsilon chains, while a peripheral stalk is formed by the delta and b chains.

The protein localises to the cell membrane. Key component of the proton channel; it plays a direct role in the translocation of protons across the membrane. The protein is ATP synthase subunit a of Geobacillus stearothermophilus (Bacillus stearothermophilus).